The sequence spans 86 residues: Toxin Td2 (86 aa).

The first 20 residues, 1 to 20, serve as a signal peptide directing secretion; it reads MTRFVLFLNCFFLICMVVEC. The 63-residue stretch at 21–83 folds into the LCN-type CS-alpha/beta domain; sequence KEGYLMGADG…TWDRATNTCG (63 aa). 4 disulfide bridges follow: Cys-31-Cys-82, Cys-35-Cys-57, Cys-43-Cys-63, and Cys-47-Cys-65. At Arg-84 the chain carries Arginine amide.

Expressed by the venom gland.

It localises to the secreted. Its function is as follows. Beta toxins bind voltage-independently at site-4 of sodium channels (Nav) and shift the voltage of activation toward more negative potentials thereby affecting sodium channel activation and promoting spontaneous and repetitive firing. The protein is Toxin Td2 of Tityus discrepans (Venezuelan scorpion).